Consider the following 429-residue polypeptide: Protein arginine N-methyltransferase 2 (429 aa).

Disordered stretches follow at residues 41 to 76 (PEVA…EDHE) and 137 to 180 (ALDS…EETP). The segment covering 137–163 (ALDSDDEDDEEMAEGEEAQAEDGEEAP) has biased composition (acidic residues). A compositionally biased stretch (low complexity) spans 164–174 (ELVAAEEATQT). The 240-residue stretch at 190 to 429 (LEEQVTSDKY…YRLPVCTFLG (240 aa)) folds into the RMT2 domain. S-adenosyl-L-methionine is bound by residues tyrosine 199, methionine 228, 250–255 (FGMGII), 271–273 (EAH), 308–309 (WQ), and aspartate 328.

It belongs to the class I-like SAM-binding methyltransferase superfamily. RMT2 methyltransferase family. In terms of assembly, monomer.

The protein resides in the cytoplasm. It localises to the nucleus. Functionally, S-adenosyl-L-methionine-dependent protein-arginine N-methyltransferase that methylates the delta-nitrogen atom of arginine residues to form N5-methylarginine (type IV) in target proteins. Monomethylates ribosomal protein L12. In Neurospora crassa (strain ATCC 24698 / 74-OR23-1A / CBS 708.71 / DSM 1257 / FGSC 987), this protein is Protein arginine N-methyltransferase 2.